We begin with the raw amino-acid sequence, 178 residues long: Protein 105R (178 aa).

Positions 1–18 (MYFLFFFLLFLFPVGVKG) are cleaved as a signal peptide.

The chain is Protein 105R from Pantherophis guttatus (Corn snake).